Here is a 990-residue protein sequence, read N- to C-terminus: Chondroitin sulfate ABC exolyase (990 aa).

His-453 serves as the catalytic Proton acceptor. The Proton donor role is filled by Tyr-460.

This sequence belongs to the polysaccharide lyase 8 family.

The catalysed reaction is Exolytic removal of Delta(4)-unsaturated disaccharide residues from the non-reducing ends of both polymeric chondroitin/dermatan sulfates and their oligosaccharide fragments.. Its activity is regulated as follows. Inhibited by Zn(2+), whereas Ni(2+), Fe(2+), and Cu(2+) have little or no effect on activity. Functionally, broad-specificity glycosaminoglycan lyase, which acts in an exolytic fashion, and preferentially degrades the tetra- and hexasaccharide derivatives of chondroitin sulfate and dermatan sulfate produced by the chondroitin sulfate ABC endolyase, to yield the respective disaccharides. To a lesser extent, is also able to split off disaccharide residues directly from polymeric chondroitin 4- and 6-sulfate, dermatan sulfate, chondroitin, and hyaluronan. Is not active against keratan sulfate, heparan sulfate, and heparin. In Proteus vulgaris, this protein is Chondroitin sulfate ABC exolyase (ChABCII).